A 107-amino-acid polypeptide reads, in one-letter code: METIAFRMVLNPGMREEYERRHAQIWPELVDALHNAGVRDYRIFFDPDSHHLFAMLTRHNHHTMNELPQLDVMRKWWDYMADIMQTAADHTPLQQPLEPVFHLNSLS.

A substrate-binding site is contributed by tyrosine 18. Histidine 22 serves as the catalytic Proton donor. Substrate-binding positions include tyrosine 41 and 76 to 77 (WW).

Belongs to the rhamnose mutarotase family. As to quaternary structure, homodimer.

It localises to the cytoplasm. The enzyme catalyses alpha-L-rhamnose = beta-L-rhamnose. The protein operates within carbohydrate metabolism; L-rhamnose metabolism. Involved in the anomeric conversion of L-rhamnose. The sequence is that of L-rhamnose mutarotase from Paraburkholderia xenovorans (strain LB400).